Consider the following 820-residue polypeptide: Nuclear pore complex protein Nup93 (820 aa).

The protein belongs to the nucleoporin interacting component (NIC) family.

The protein localises to the nucleus membrane. The protein resides in the nucleus. Its subcellular location is the nuclear pore complex. Its function is as follows. Plays a role in the nuclear pore complex (NPC) assembly and/or maintenance. The protein is Nuclear pore complex protein Nup93 (dye) of Danio rerio (Zebrafish).